The sequence spans 534 residues: Benzaldehyde dehydrogenase, mitochondrial (534 aa).

A mitochondrion-targeting transit peptide spans 1 to 29 (MAAHRFSSLLSRSVPLLSRGGKQSYLGRG). NAD(+)-binding positions include 199-202 (IPWN), 225-228 (KTAE), 258-259 (GP), 278-279 (GS), and 301-303 (ELG). The Proton acceptor role is filled by glutamate 301. The active-site Nucleophile is the cysteine 335. NAD(+) contacts are provided by residues 381 to 385 (DQFEK) and 432 to 434 (EIF).

This sequence belongs to the aldehyde dehydrogenase family. In terms of assembly, homotetramer. As to expression, expressed predominantly in the upper and lower flower petal lobes, and, at low levels, in flower tubes, pistils, stamens and sepals.

It is found in the mitochondrion. It catalyses the reaction an aldehyde + NAD(+) + H2O = a carboxylate + NADH + 2 H(+). The enzyme catalyses acetaldehyde + NAD(+) + H2O = acetate + NADH + 2 H(+). It carries out the reaction benzaldehyde + NAD(+) + H2O = benzoate + NADH + 2 H(+). The catalysed reaction is 2-phenylacetaldehyde + NAD(+) + H2O = 2-phenylacetate + NADH + 2 H(+). It participates in aromatic compound metabolism. Inhibited by disulfiram. Functionally, component of the floral volatile benzenoid/phenylpropanoid (FVBP) biosynthetic pathway. Catalyzes the oxidation of benzaldehyde to benzoic acid (BA). Capable of oxidizing a broad spectrum of aliphatic aldehydes; increased carbon chain length results in a decrease in its efficiency. In Antirrhinum majus (Garden snapdragon), this protein is Benzaldehyde dehydrogenase, mitochondrial.